The primary structure comprises 68 residues: Beta-defensin 1 (68 aa).

The first 21 residues, 1-21 (MRTSYLLLFTLCLLLSEMASG), serve as a signal peptide directing secretion. A propeptide spanning residues 22-32 (DNFLTGLGHRS) is cleaved from the precursor. Cystine bridges form between C37/C66, C44/C59, and C49/C67.

Belongs to the beta-defensin family. Monomer. Homodimer.

It is found in the secreted. It localises to the membrane. Has bactericidal activity. May act as a ligand for C-C chemokine receptor CCR6. Positively regulates the sperm motility and bactericidal activity in a CCR6-dependent manner. Binds to CCR6 and triggers Ca2+ mobilization in the sperm which is important for its motility. This Macaca mulatta (Rhesus macaque) protein is Beta-defensin 1 (DEFB1).